We begin with the raw amino-acid sequence, 657 residues long: Filensin (657 aa).

Residues 1–38 (MYRSSFLREVRKEKYERSDAYDELRGSPEFDSLAQAQG) form a head region. Positions 38–318 (GLENLQELNE…RIIENEDSRL (281 aa)) constitute an IF rod domain. The interval 39 to 73 (LENLQELNERFASYINRARVLEQRNTILRKQLETF) is coil 1A. The segment at 74-82 (QRMDELVGL) is linker 1. The tract at residues 83–182 (DEAFAGQIEF…RYKKNLMEIQ (100 aa)) is coil 1B. The segment at 183 to 199 (TYVNILQQIIQTTPRVS) is linker 12. The coil 2 stretch occupies residues 200–318 (PITTGISEEK…RIIENEDSRL (119 aa)). The tract at residues 319 to 657 (NSAIAGTPVT…SKKKPGDKGS (339 aa)) is tail. 2 disordered regions span residues 503–530 (IGGD…ICER) and 565–593 (PDVS…TDHD). The segment covering 519 to 530 (PSEKEKRDICER) has biased composition (basic and acidic residues).

Belongs to the intermediate filament family. As to expression, detected in eye lens fiber cells (at protein level). Detected in embryonic eye lens.

It localises to the cell membrane. The protein resides in the cytoplasm. It is found in the cytoskeleton. The protein localises to the cell cortex. Its function is as follows. Required for the correct formation of lens intermediate filaments. In Gallus gallus (Chicken), this protein is Filensin (BFSP1).